A 101-amino-acid chain; its full sequence is Large ribosomal subunit protein uL24 (101 aa).

It belongs to the universal ribosomal protein uL24 family. As to quaternary structure, part of the 50S ribosomal subunit.

One of two assembly initiator proteins, it binds directly to the 5'-end of the 23S rRNA, where it nucleates assembly of the 50S subunit. Functionally, one of the proteins that surrounds the polypeptide exit tunnel on the outside of the subunit. The chain is Large ribosomal subunit protein uL24 from Paracoccus denitrificans (strain Pd 1222).